The following is a 126-amino-acid chain: Small ribosomal subunit protein uS13 (126 aa).

The segment at His92 to Lys126 is disordered. A compositionally biased stretch (basic residues) spans Thr105–Leu118.

It belongs to the universal ribosomal protein uS13 family. As to quaternary structure, part of the 30S ribosomal subunit. Forms a loose heterodimer with protein S19. Forms two bridges to the 50S subunit in the 70S ribosome.

Functionally, located at the top of the head of the 30S subunit, it contacts several helices of the 16S rRNA. In the 70S ribosome it contacts the 23S rRNA (bridge B1a) and protein L5 of the 50S subunit (bridge B1b), connecting the 2 subunits; these bridges are implicated in subunit movement. Contacts the tRNAs in the A and P-sites. In Sorangium cellulosum (strain So ce56) (Polyangium cellulosum (strain So ce56)), this protein is Small ribosomal subunit protein uS13.